The following is a 419-amino-acid chain: Putative actin-fragmin kinase DDB_G0279609 (419 aa).

Residues 73 to 94 (INNNNNSINNNNNNNNKNKNKN) are disordered.

It belongs to the protein kinase superfamily. AFK Ser/Thr protein kinase family.

This is Putative actin-fragmin kinase DDB_G0279609 from Dictyostelium discoideum (Social amoeba).